Consider the following 172-residue polypeptide: IFFYEERNFQGRCYECSSECSDLSSYFNRCNSIRVESGNWILYEQPSYRGHQYYLWKGEYPDFQRWMGFNDYIKSCRFIPHPHSQYKMRIYERGDFQGQMMEFFDDCPNTYDRFRFRDIHSCNVSDGHWMFYEEPNYKGRQYYLRPGEYRRFSDWGASSARIGSFRRVHHMV.

2 consecutive Beta/gamma crystallin 'Greek key' domains span residues 1-37 and 38-80; these read IFFYEERNFQGRCYECSSECSDLSSYFNRCNSIRVES and GNWI…RFIP. Residues 81 to 85 form a connecting peptide region; sequence HPHSQ. 2 consecutive Beta/gamma crystallin 'Greek key' domains span residues 86–126 and 127–169; these read YKMR…NVSD and GHWM…RRVH.

The protein belongs to the beta/gamma-crystallin family. Monomer.

Its function is as follows. Crystallins are the dominant structural components of the vertebrate eye lens. The polypeptide is Gamma-crystallin-4 (cryg4) (Xenopus laevis (African clawed frog)).